A 271-amino-acid chain; its full sequence is Tryptophan synthase alpha chain (271 aa).

Active-site proton acceptor residues include Glu49 and Asp60.

It belongs to the TrpA family. Tetramer of two alpha and two beta chains.

The enzyme catalyses (1S,2R)-1-C-(indol-3-yl)glycerol 3-phosphate + L-serine = D-glyceraldehyde 3-phosphate + L-tryptophan + H2O. Its pathway is amino-acid biosynthesis; L-tryptophan biosynthesis; L-tryptophan from chorismate: step 5/5. The alpha subunit is responsible for the aldol cleavage of indoleglycerol phosphate to indole and glyceraldehyde 3-phosphate. This chain is Tryptophan synthase alpha chain, found in Aromatoleum aromaticum (strain DSM 19018 / LMG 30748 / EbN1) (Azoarcus sp. (strain EbN1)).